A 410-amino-acid polypeptide reads, in one-letter code: Mating-type locus allele B4 protein (410 aa).

The segment at 1 to 110 (MSSDPKISIT…ANASSPVVGC (110 aa)) is variable domain between B alleles. The homeobox; TALE-type DNA-binding region spans 107 to 184 (VVGCRELSED…NARRRSGWSH (78 aa)). Residues 111 to 410 (RELSEDLPAY…PFLCLSVAFV (300 aa)) form a highly conserved between B alleles region. 3 disordered regions span residues 202–241 (RAKL…TPAD), 278–335 (TPKP…TPEL), and 375–394 (RGNR…QPDE). Residues 206–222 (SSSNQSTPPSPTSEYPS) show a composition bias toward low complexity. A Nuclear localization signal motif is present at residues 276–308 (KKTPKPGMPRPVTTVAKRQPARKTKPAAKPKSR). The span at 294–307 (QPARKTKPAAKPKS) shows a compositional bias: basic residues. Residues 312–335 (PRASTTPSIDSTLDSSKLESTPEL) are compositionally biased toward polar residues. The tract at residues 333–410 (PELSMCSTAD…PFLCLSVAFV (78 aa)) is not essential for B4 function. Residues 375-388 (RGNRKVKALPKRAG) show a composition bias toward basic residues.

This sequence belongs to the TALE/M-ATYP homeobox family.

The protein localises to the nucleus. The B locus has at least 25 alleles, and any combination of two different B alleles yields a multimeric regulatory protein, that activates genes responsible for the pathogenicity and for the sexual development of the fungus within the corn plant. The chain is Mating-type locus allele B4 protein from Mycosarcoma maydis (Corn smut fungus).